A 172-amino-acid polypeptide reads, in one-letter code: MAKKVAIILTNEFEDIELTSPKEAIEEAGHETVVIGDQANSEVVGKHGTKVAVDVSIADAKPEDFDGLLIPGGFSPDHLRGDAEGRYGTFAKYFTKNDVPAFAICHGPQILIDTDDLNGRTLTAVLNVRKDLANAGAQVVDESVVVDKNIVTSRTPDDLDDFNREIVNQLND.

Positions 3 to 171 (KKVAIILTNE…FNREIVNQLN (169 aa)) constitute a PfpI endopeptidase domain.

This sequence belongs to the peptidase C56 family.

This is an uncharacterized protein from Staphylococcus saprophyticus subsp. saprophyticus (strain ATCC 15305 / DSM 20229 / NCIMB 8711 / NCTC 7292 / S-41).